A 423-amino-acid chain; its full sequence is Serine--tRNA ligase (423 aa).

Position 231–233 (231–233) interacts with L-serine; sequence TAE. ATP is bound at residue 262–264; sequence RSE. L-serine is bound at residue Glu-285. Residue 349–352 participates in ATP binding; it reads EISS. Ser-384 provides a ligand contact to L-serine.

The protein belongs to the class-II aminoacyl-tRNA synthetase family. Type-1 seryl-tRNA synthetase subfamily. As to quaternary structure, homodimer. The tRNA molecule binds across the dimer.

The protein resides in the cytoplasm. It catalyses the reaction tRNA(Ser) + L-serine + ATP = L-seryl-tRNA(Ser) + AMP + diphosphate + H(+). The catalysed reaction is tRNA(Sec) + L-serine + ATP = L-seryl-tRNA(Sec) + AMP + diphosphate + H(+). Its pathway is aminoacyl-tRNA biosynthesis; selenocysteinyl-tRNA(Sec) biosynthesis; L-seryl-tRNA(Sec) from L-serine and tRNA(Sec): step 1/1. Its function is as follows. Catalyzes the attachment of serine to tRNA(Ser). Is also able to aminoacylate tRNA(Sec) with serine, to form the misacylated tRNA L-seryl-tRNA(Sec), which will be further converted into selenocysteinyl-tRNA(Sec). The sequence is that of Serine--tRNA ligase from Lactococcus lactis subsp. cremoris (strain SK11).